Here is a 568-residue protein sequence, read N- to C-terminus: Potassium-transporting ATPase potassium-binding subunit (568 aa).

The next 11 helical transmembrane spans lie at Ile6 to Phe26, Thr64 to Ile84, Ile135 to Phe155, Leu179 to Ile199, Leu254 to Phe274, Trp285 to Ala305, Gly382 to Gly402, Met419 to Ile439, Val459 to Thr481, Leu488 to Gly508, and Leu529 to Ala549.

Belongs to the KdpA family. In terms of assembly, the system is composed of three essential subunits: KdpA, KdpB and KdpC.

It localises to the cell inner membrane. Functionally, part of the high-affinity ATP-driven potassium transport (or Kdp) system, which catalyzes the hydrolysis of ATP coupled with the electrogenic transport of potassium into the cytoplasm. This subunit binds the periplasmic potassium ions and delivers the ions to the membrane domain of KdpB through an intramembrane tunnel. The protein is Potassium-transporting ATPase potassium-binding subunit of Solibacter usitatus (strain Ellin6076).